Reading from the N-terminus, the 413-residue chain is MNIYAVGGAIRDELLGVPVQDRDYVVVGATPEQMVAQGFRPVGKDFPVFLHPDTQEEYALARTERKTAAGYHGFQFYFAPDVTLDEDLARRDLTINAMAREVSPEGALVGPVIDPFDGQADLRARVFRHVGDAFVEDPVRILRIARFAARFADFTVADDTLALMRRMVDAGEADALVAERVWQEIARGLMEAKPSRMFAVLRECGALARVLPEVDALWGVPQRADYHPEVDTGVHVMMVVDYAAKQGYSLPVRFAALTHDLGKATTPADVLPRHVGHEGRSVELIKPLCERLRVPNDCRDLALVVAREHGNLHRVMEMGAAALVRFFERSDALRKPARFAEMLQACESDARGRLGLDTQPYPQAERLRVALVAARSVDAGAIARGVGDDVMQIKDAVHRARVEAVKQALAIGE.

The ATP site is built by Gly8 and Arg11. Residues Gly8 and Arg11 each coordinate CTP. Positions 21 and 23 each coordinate Mg(2+). Residues Arg91, Arg143, and Arg146 each coordinate ATP. CTP-binding residues include Arg91, Arg143, and Arg146. One can recognise an HD domain in the interval 232–333; it reads TGVHVMMVVD…VRFFERSDAL (102 aa).

It belongs to the tRNA nucleotidyltransferase/poly(A) polymerase family. Bacterial CCA-adding enzyme type 1 subfamily. In terms of assembly, monomer. Can also form homodimers and oligomers. The cofactor is Mg(2+). It depends on Ni(2+) as a cofactor.

The catalysed reaction is a tRNA precursor + 2 CTP + ATP = a tRNA with a 3' CCA end + 3 diphosphate. It catalyses the reaction a tRNA with a 3' CCA end + 2 CTP + ATP = a tRNA with a 3' CCACCA end + 3 diphosphate. Catalyzes the addition and repair of the essential 3'-terminal CCA sequence in tRNAs without using a nucleic acid template. Adds these three nucleotides in the order of C, C, and A to the tRNA nucleotide-73, using CTP and ATP as substrates and producing inorganic pyrophosphate. tRNA 3'-terminal CCA addition is required both for tRNA processing and repair. Also involved in tRNA surveillance by mediating tandem CCA addition to generate a CCACCA at the 3' terminus of unstable tRNAs. While stable tRNAs receive only 3'-terminal CCA, unstable tRNAs are marked with CCACCA and rapidly degraded. The polypeptide is Multifunctional CCA protein (Burkholderia ambifaria (strain MC40-6)).